The sequence spans 238 residues: MLLIVGLGNPGAKYQGNRHNIGFMAVDAIHRRHSFSPWAKKFRAEISEGELGGQKVLLIKPQTFMNLSGESVGEAMRFYKLEPSDLVVIYDELDLPAAKARLKTGGGHGGHNGIKSIDAHCGREYRRLRLGIGHPGVKELVQNHVLGDFAKVDRDWLEPLFDALADNADMLVRGEDSQLMNKIALALGGKTEEPAPKPEKKTVAKSHIHQARNHNQPRMPESGPMAEMLKRMFGKKDD.

A tRNA-binding site is contributed by Tyr-14. The Proton acceptor role is filled by His-19. 3 residues coordinate tRNA: Phe-64, Asn-66, and Asn-112. Over residues 190–202 the composition is skewed to basic and acidic residues; the sequence is KTEEPAPKPEKKT. Positions 190–225 are disordered; that stretch reads KTEEPAPKPEKKTVAKSHIHQARNHNQPRMPESGPM. Over residues 203–212 the composition is skewed to basic residues; the sequence is VAKSHIHQAR.

The protein belongs to the PTH family. Monomer.

Its subcellular location is the cytoplasm. The catalysed reaction is an N-acyl-L-alpha-aminoacyl-tRNA + H2O = an N-acyl-L-amino acid + a tRNA + H(+). Hydrolyzes ribosome-free peptidyl-tRNAs (with 1 or more amino acids incorporated), which drop off the ribosome during protein synthesis, or as a result of ribosome stalling. In terms of biological role, catalyzes the release of premature peptidyl moieties from peptidyl-tRNA molecules trapped in stalled 50S ribosomal subunits, and thus maintains levels of free tRNAs and 50S ribosomes. The protein is Peptidyl-tRNA hydrolase of Rhizobium rhizogenes (strain K84 / ATCC BAA-868) (Agrobacterium radiobacter).